The primary structure comprises 607 residues: Fatty acid amide hydrolase (607 aa).

Residues lysine 204 and serine 280 each act as charge relay system in the active site. Position 301–304 (301–304) interacts with substrate; that stretch reads GGGS. The Acyl-ester intermediate role is filled by serine 304.

The protein belongs to the amidase family. As to quaternary structure, forms homodimers.

Its subcellular location is the endoplasmic reticulum membrane. It is found in the cell membrane. It catalyses the reaction N-(9Z,12Z-octadecadienoyl)-ethanolamine + H2O = ethanolamine + (9Z,12Z)-octadecadienoate. Functionally, catalyzes the hydrolysis of bioactive endogenous fatty acid amides to their corresponding acids. The hydrolysis of endogenous amidated lipids terminates their participation as lipid mediators in various signaling systems. Converts a wide range of N-acylethanolamines (NAEs) to their corresponding free fatty acids and ethanolamine. The protein is Fatty acid amide hydrolase of Medicago truncatula (Barrel medic).